Consider the following 311-residue polypeptide: Acetyl-coenzyme A carboxylase carboxyl transferase subunit beta (311 aa).

One can recognise a CoA carboxyltransferase N-terminal domain in the interval 27–296 (LWTKCGHCSA…AEAADAPEAG (270 aa)). The Zn(2+) site is built by Cys31, Cys34, Cys50, and Cys53. The C4-type zinc finger occupies 31 to 53 (CGHCSAVLYRPELERNQEVCPKC). Residues 286-299 (AAEAADAPEAGEQP) are compositionally biased toward low complexity. Residues 286-311 (AAEAADAPEAGEQPSEATDPVGEHWD) form a disordered region.

The protein belongs to the AccD/PCCB family. As to quaternary structure, acetyl-CoA carboxylase is a heterohexamer composed of biotin carboxyl carrier protein (AccB), biotin carboxylase (AccC) and two subunits each of ACCase subunit alpha (AccA) and ACCase subunit beta (AccD). The cofactor is Zn(2+).

The protein resides in the cytoplasm. It carries out the reaction N(6)-carboxybiotinyl-L-lysyl-[protein] + acetyl-CoA = N(6)-biotinyl-L-lysyl-[protein] + malonyl-CoA. The protein operates within lipid metabolism; malonyl-CoA biosynthesis; malonyl-CoA from acetyl-CoA: step 1/1. Its function is as follows. Component of the acetyl coenzyme A carboxylase (ACC) complex. Biotin carboxylase (BC) catalyzes the carboxylation of biotin on its carrier protein (BCCP) and then the CO(2) group is transferred by the transcarboxylase to acetyl-CoA to form malonyl-CoA. The chain is Acetyl-coenzyme A carboxylase carboxyl transferase subunit beta from Alkalilimnicola ehrlichii (strain ATCC BAA-1101 / DSM 17681 / MLHE-1).